We begin with the raw amino-acid sequence, 60 residues long: Large ribosomal subunit protein bL32 (60 aa).

The interval 1–23 (MAVPARHTSKAKKNKRRTHYKLT) is disordered. Positions 7–20 (HTSKAKKNKRRTHY) are enriched in basic residues.

The protein belongs to the bacterial ribosomal protein bL32 family.

The polypeptide is Large ribosomal subunit protein bL32 (Streptococcus equi subsp. equi (strain 4047)).